A 339-amino-acid chain; its full sequence is D-erythrose-4-phosphate dehydrogenase (339 aa).

Residue 12–13 coordinates NAD(+); the sequence is RI. Residues 154-156, Arg-200, 213-214, and Arg-236 contribute to the substrate site; these read SCT and TK. The active-site Nucleophile is Cys-155. Position 318 (Asn-318) interacts with NAD(+).

It belongs to the glyceraldehyde-3-phosphate dehydrogenase family. Epd subfamily. In terms of assembly, homotetramer.

It localises to the cytoplasm. The catalysed reaction is D-erythrose 4-phosphate + NAD(+) + H2O = 4-phospho-D-erythronate + NADH + 2 H(+). The protein operates within cofactor biosynthesis; pyridoxine 5'-phosphate biosynthesis; pyridoxine 5'-phosphate from D-erythrose 4-phosphate: step 1/5. In terms of biological role, catalyzes the NAD-dependent conversion of D-erythrose 4-phosphate to 4-phosphoerythronate. This is D-erythrose-4-phosphate dehydrogenase from Proteus mirabilis (strain HI4320).